Here is a 100-residue protein sequence, read N- to C-terminus: Putative PIN1-like protein (100 aa).

Over residues 1-15 (MADEEKLPPGWEKRM) the composition is skewed to basic and acidic residues. Disordered regions lie at residues 1 to 52 (MADE…QGEP) and 69 to 100 (LDLAAGNHPDQGGGPGADQRLHPEDQGRREGL). The WW domain maps to 5-38 (EKLPPGWEKRMSRPSGRGYYFNHITNPSQWERPS). Residues 27 to 44 (HITNPSQWERPSGNSSSG) are compositionally biased toward polar residues. A compositionally biased stretch (basic and acidic residues) spans 87-100 (QRLHPEDQGRREGL).

The sequence is that of Putative PIN1-like protein (PIN1P1) from Homo sapiens (Human).